Consider the following 256-residue polypeptide: Phosphonates import ATP-binding protein PhnC (256 aa).

The ABC transporter domain occupies 5-253 (LRITGLVKEY…MLKTIYGGES (249 aa)). An ATP-binding site is contributed by 38–45 (GPSGTGKS).

It belongs to the ABC transporter superfamily. Phosphonates importer (TC 3.A.1.9.1) family. As to quaternary structure, the complex is composed of two ATP-binding proteins (PhnC), two transmembrane proteins (PhnE) and a solute-binding protein (PhnD).

It is found in the cell inner membrane. The enzyme catalyses phosphonate(out) + ATP + H2O = phosphonate(in) + ADP + phosphate + H(+). Part of the ABC transporter complex PhnCDE involved in phosphonates import. Responsible for energy coupling to the transport system. In Bordetella parapertussis (strain 12822 / ATCC BAA-587 / NCTC 13253), this protein is Phosphonates import ATP-binding protein PhnC.